Reading from the N-terminus, the 631-residue chain is Phosphomethylpyrimidine synthase (631 aa).

Substrate contacts are provided by residues asparagine 239, methionine 268, tyrosine 297, histidine 333, serine 353–glycine 355, aspartate 394–arginine 397, and glutamate 433. Histidine 437 contacts Zn(2+). Tyrosine 460 is a binding site for substrate. Histidine 501 lines the Zn(2+) pocket. Residues cysteine 581, cysteine 584, and cysteine 589 each contribute to the [4Fe-4S] cluster site.

This sequence belongs to the ThiC family. Homodimer. [4Fe-4S] cluster serves as cofactor.

The catalysed reaction is 5-amino-1-(5-phospho-beta-D-ribosyl)imidazole + S-adenosyl-L-methionine = 4-amino-2-methyl-5-(phosphooxymethyl)pyrimidine + CO + 5'-deoxyadenosine + formate + L-methionine + 3 H(+). It functions in the pathway cofactor biosynthesis; thiamine diphosphate biosynthesis. Catalyzes the synthesis of the hydroxymethylpyrimidine phosphate (HMP-P) moiety of thiamine from aminoimidazole ribotide (AIR) in a radical S-adenosyl-L-methionine (SAM)-dependent reaction. This Citrobacter koseri (strain ATCC BAA-895 / CDC 4225-83 / SGSC4696) protein is Phosphomethylpyrimidine synthase.